The chain runs to 250 residues: MTPFRRPIVLATSASAPFPPAEAALTDPDGLLAVGGDLSPQRLLNAYAHGIFPWYSDGRPILWWSPDPRMVFRTDGVRLSSRFKRQLRASTWTVRADTAFEQVIDACAASPRPGQDGTWITAEMQQAYIALHRLGHAHSIEVFDGARLVGGIYGVAVGRMFFGESMFSGESGGSKVALAALAADLHGRGWPLIDAQVENPHLLSMGAERLPRAEFLHDVQRQVALAEQPGSWSQRYGEHAASDLCETHLT.

Belongs to the L/F-transferase family.

It localises to the cytoplasm. It carries out the reaction N-terminal L-lysyl-[protein] + L-leucyl-tRNA(Leu) = N-terminal L-leucyl-L-lysyl-[protein] + tRNA(Leu) + H(+). The enzyme catalyses N-terminal L-arginyl-[protein] + L-leucyl-tRNA(Leu) = N-terminal L-leucyl-L-arginyl-[protein] + tRNA(Leu) + H(+). The catalysed reaction is L-phenylalanyl-tRNA(Phe) + an N-terminal L-alpha-aminoacyl-[protein] = an N-terminal L-phenylalanyl-L-alpha-aminoacyl-[protein] + tRNA(Phe). Functionally, functions in the N-end rule pathway of protein degradation where it conjugates Leu, Phe and, less efficiently, Met from aminoacyl-tRNAs to the N-termini of proteins containing an N-terminal arginine or lysine. In Xanthomonas oryzae pv. oryzae (strain MAFF 311018), this protein is Leucyl/phenylalanyl-tRNA--protein transferase.